The primary structure comprises 246 residues: 3-deoxy-manno-octulosonate cytidylyltransferase (246 aa).

This sequence belongs to the KdsB family.

The protein resides in the cytoplasm. The catalysed reaction is 3-deoxy-alpha-D-manno-oct-2-ulosonate + CTP = CMP-3-deoxy-beta-D-manno-octulosonate + diphosphate. Its pathway is nucleotide-sugar biosynthesis; CMP-3-deoxy-D-manno-octulosonate biosynthesis; CMP-3-deoxy-D-manno-octulosonate from 3-deoxy-D-manno-octulosonate and CTP: step 1/1. It participates in bacterial outer membrane biogenesis; lipopolysaccharide biosynthesis. In terms of biological role, activates KDO (a required 8-carbon sugar) for incorporation into bacterial lipopolysaccharide in Gram-negative bacteria. The sequence is that of 3-deoxy-manno-octulosonate cytidylyltransferase from Bradyrhizobium sp. (strain ORS 278).